A 439-amino-acid polypeptide reads, in one-letter code: Xaa-Pro dipeptidase (439 aa).

Mn(2+)-binding residues include aspartate 244, aspartate 255, histidine 335, glutamate 380, and glutamate 418.

It belongs to the peptidase M24B family. Bacterial-type prolidase subfamily. Mn(2+) is required as a cofactor.

The catalysed reaction is Xaa-L-Pro dipeptide + H2O = an L-alpha-amino acid + L-proline. Functionally, splits dipeptides with a prolyl residue in the C-terminal position. This is Xaa-Pro dipeptidase from Shewanella frigidimarina (strain NCIMB 400).